A 405-amino-acid polypeptide reads, in one-letter code: Riboflavin biosynthesis protein RibBA (405 aa).

Residues 1-205 (MSEIQLNTIE…IKDLIAYRLR (205 aa)) are DHBP synthase. Residues 30 to 31 (RE), aspartate 35, 144 to 148 (RAGHT), and glutamate 168 contribute to the D-ribulose 5-phosphate site. Glutamate 31 is a binding site for Mg(2+). Histidine 147 serves as a coordination point for Mg(2+). The GTP cyclohydrolase II stretch occupies residues 206 to 405 (TESIVENGVE…RMGHVLHNIK (200 aa)). A GTP-binding site is contributed by 256-260 (RVHSS). 3 residues coordinate Zn(2+): cysteine 261, cysteine 272, and cysteine 274. GTP contacts are provided by residues glutamine 277, 299 to 301 (EGR), and threonine 321. Aspartate 333 functions as the Proton acceptor; for GTP cyclohydrolase activity in the catalytic mechanism. Arginine 335 functions as the Nucleophile; for GTP cyclohydrolase activity in the catalytic mechanism. GTP is bound by residues serine 356 and lysine 361.

The protein in the N-terminal section; belongs to the DHBP synthase family. This sequence in the C-terminal section; belongs to the GTP cyclohydrolase II family. Mg(2+) serves as cofactor. Requires Mn(2+) as cofactor. It depends on Zn(2+) as a cofactor.

It catalyses the reaction D-ribulose 5-phosphate = (2S)-2-hydroxy-3-oxobutyl phosphate + formate + H(+). It carries out the reaction GTP + 4 H2O = 2,5-diamino-6-hydroxy-4-(5-phosphoribosylamino)-pyrimidine + formate + 2 phosphate + 3 H(+). It functions in the pathway cofactor biosynthesis; riboflavin biosynthesis; 2-hydroxy-3-oxobutyl phosphate from D-ribulose 5-phosphate: step 1/1. The protein operates within cofactor biosynthesis; riboflavin biosynthesis; 5-amino-6-(D-ribitylamino)uracil from GTP: step 1/4. Catalyzes the conversion of D-ribulose 5-phosphate to formate and 3,4-dihydroxy-2-butanone 4-phosphate. Functionally, catalyzes the conversion of GTP to 2,5-diamino-6-ribosylamino-4(3H)-pyrimidinone 5'-phosphate (DARP), formate and pyrophosphate. In Parabacteroides distasonis (strain ATCC 8503 / DSM 20701 / CIP 104284 / JCM 5825 / NCTC 11152), this protein is Riboflavin biosynthesis protein RibBA.